We begin with the raw amino-acid sequence, 185 residues long: Ribosome-recycling factor (185 aa).

It belongs to the RRF family.

The protein resides in the cytoplasm. Its function is as follows. Responsible for the release of ribosomes from messenger RNA at the termination of protein biosynthesis. May increase the efficiency of translation by recycling ribosomes from one round of translation to another. In Bacillus pumilus (strain SAFR-032), this protein is Ribosome-recycling factor.